Reading from the N-terminus, the 184-residue chain is Probable RNA 2'-phosphotransferase (184 aa).

Belongs to the KptA/TPT1 family.

Removes the 2'-phosphate from RNA via an intermediate in which the phosphate is ADP-ribosylated by NAD followed by a presumed transesterification to release the RNA and generate ADP-ribose 1''-2''-cyclic phosphate (APPR&gt;P). May function as an ADP-ribosylase. The chain is Probable RNA 2'-phosphotransferase from Rhizobium johnstonii (strain DSM 114642 / LMG 32736 / 3841) (Rhizobium leguminosarum bv. viciae).